We begin with the raw amino-acid sequence, 343 residues long: tRNA N6-adenosine threonylcarbamoyltransferase (343 aa).

His-120 and His-124 together coordinate Fe cation. Substrate is bound by residues 142-146, Asp-175, Gly-188, Asp-192, and Asn-281; that span reads VVSGG. A Fe cation-binding site is contributed by Asp-310.

It belongs to the KAE1 / TsaD family. Fe(2+) serves as cofactor.

The protein resides in the cytoplasm. It carries out the reaction L-threonylcarbamoyladenylate + adenosine(37) in tRNA = N(6)-L-threonylcarbamoyladenosine(37) in tRNA + AMP + H(+). In terms of biological role, required for the formation of a threonylcarbamoyl group on adenosine at position 37 (t(6)A37) in tRNAs that read codons beginning with adenine. Is involved in the transfer of the threonylcarbamoyl moiety of threonylcarbamoyl-AMP (TC-AMP) to the N6 group of A37, together with TsaE and TsaB. TsaD likely plays a direct catalytic role in this reaction. In Bacillus thuringiensis (strain Al Hakam), this protein is tRNA N6-adenosine threonylcarbamoyltransferase.